The following is a 187-amino-acid chain: Photosystem I assembly protein Ycf4 (187 aa).

Helical transmembrane passes span 23–43 and 70–90; these read INYF…IVGI and FYGI…ILGV.

Belongs to the Ycf4 family.

It is found in the plastid. The protein resides in the chloroplast thylakoid membrane. Seems to be required for the assembly of the photosystem I complex. The sequence is that of Photosystem I assembly protein Ycf4 from Chara vulgaris (Common stonewort).